Here is a 1437-residue protein sequence, read N- to C-terminus: Myomesin-3 (1437 aa).

The tract at residues 1–49 (MTLPHSLGGAGDPRPPQAMEVHRLEHRQEEEQKEERQHSLRMGSSVRRR) is disordered. Residues 20-38 (EVHRLEHRQEEEQKEERQH) are compositionally biased toward basic and acidic residues. The stretch at 120 to 149 (RLLRQRRDWKTLRRRTEEKVQEAKELRELC) forms a coiled coil. Ig-like C2-type domains follow at residues 154-246 (PWFW…AKVL) and 269-361 (PSVE…TYVL). Fibronectin type-III domains are found at residues 375 to 469 (SPLN…VMGD), 503 to 598 (PPTN…LRGP), 604 to 696 (PPAQ…VKQA), 702 to 797 (APYG…CKEW), and 804 to 899 (PPYD…LEDK). Ig-like C2-type domains lie at 1120 to 1205 (PYFE…LDLT) and 1334 to 1423 (AKVV…VTIS).

As to quaternary structure, homodimer.

The protein resides in the cytoplasm. Its subcellular location is the myofibril. It localises to the sarcomere. It is found in the m line. May link the intermediate filament cytoskeleton to the M-disk of the myofibrils in striated muscle. The sequence is that of Myomesin-3 (MYOM3) from Homo sapiens (Human).